Here is a 166-residue protein sequence, read N- to C-terminus: NAD(P)H-quinone oxidoreductase subunit I, chloroplastic (166 aa).

4Fe-4S ferredoxin-type domains are found at residues 55 to 84 and 95 to 124; these read GRIH…VDWK and LNYS…MTEE. 8 residues coordinate [4Fe-4S] cluster: Cys64, Cys67, Cys70, Cys74, Cys104, Cys107, Cys110, and Cys114.

The protein belongs to the complex I 23 kDa subunit family. NDH is composed of at least 16 different subunits, 5 of which are encoded in the nucleus. Requires [4Fe-4S] cluster as cofactor.

The protein localises to the plastid. It is found in the chloroplast thylakoid membrane. It catalyses the reaction a plastoquinone + NADH + (n+1) H(+)(in) = a plastoquinol + NAD(+) + n H(+)(out). It carries out the reaction a plastoquinone + NADPH + (n+1) H(+)(in) = a plastoquinol + NADP(+) + n H(+)(out). NDH shuttles electrons from NAD(P)H:plastoquinone, via FMN and iron-sulfur (Fe-S) centers, to quinones in the photosynthetic chain and possibly in a chloroplast respiratory chain. The immediate electron acceptor for the enzyme in this species is believed to be plastoquinone. Couples the redox reaction to proton translocation, and thus conserves the redox energy in a proton gradient. This is NAD(P)H-quinone oxidoreductase subunit I, chloroplastic from Silphium perfoliatum (Cup plant).